A 513-amino-acid polypeptide reads, in one-letter code: Light-independent protochlorophyllide reductase subunit B (513 aa).

D36 provides a ligand contact to [4Fe-4S] cluster. The active-site Proton donor is D299. 434–435 (GM) serves as a coordination point for substrate.

Belongs to the ChlB/BchB/BchZ family. Protochlorophyllide reductase is composed of three subunits; ChlL, ChlN and ChlB. Forms a heterotetramer of two ChlB and two ChlN subunits. It depends on [4Fe-4S] cluster as a cofactor.

The protein localises to the plastid. The protein resides in the chloroplast. The catalysed reaction is chlorophyllide a + oxidized 2[4Fe-4S]-[ferredoxin] + 2 ADP + 2 phosphate = protochlorophyllide a + reduced 2[4Fe-4S]-[ferredoxin] + 2 ATP + 2 H2O. The protein operates within porphyrin-containing compound metabolism; chlorophyll biosynthesis (light-independent). Component of the dark-operative protochlorophyllide reductase (DPOR) that uses Mg-ATP and reduced ferredoxin to reduce ring D of protochlorophyllide (Pchlide) to form chlorophyllide a (Chlide). This reaction is light-independent. The NB-protein (ChlN-ChlB) is the catalytic component of the complex. The chain is Light-independent protochlorophyllide reductase subunit B from Marchantia polymorpha (Common liverwort).